The primary structure comprises 347 residues: Protein RecA (347 aa).

68-75 (GPESSGKT) lines the ATP pocket.

Belongs to the RecA family.

It is found in the cytoplasm. Can catalyze the hydrolysis of ATP in the presence of single-stranded DNA, the ATP-dependent uptake of single-stranded DNA by duplex DNA, and the ATP-dependent hybridization of homologous single-stranded DNAs. It interacts with LexA causing its activation and leading to its autocatalytic cleavage. The chain is Protein RecA from Mycobacterium sp. (strain JLS).